We begin with the raw amino-acid sequence, 469 residues long: MAKTLYEKLFDSHIVYEAEGETPILYINRHLIHEVTSPQAFDGLRVANRQVRQVNKTFGTMDHSISTQVRDVNKLEGQAKIQVLELDKNTKATGIKLFDITTKEQGIVHVMGPEQGLTLPGMTIVCGDSHTATHGAFGALAFGIGTSEVEHVLATQTLKQARAKSMKIEVRGKVASGITAKDIILAIIGKTTMAGGTGHVVEFCGEAIQDLSMEGRMTVCNMAIEMGAKAGLIAPDETTFAYLKDRPHAPKGKDWEDAVAYWKTLKSDDDAQFDTVVTLEAKDIAPQVTWGTNPGQVISVNETIPNPQEMADPVQRASAEKALHYIGLEAGTNLKDIKVDQVFIGSCTNSRIEDLRAAAAVMKGRKKADNVKRILVVPGSGLVKEQAEKEGLDKIFIAAGAEWRNPGCSMCLGMNDDRLGEWERCASTSNRNFEGRQGRNGRTHLVSPAMAAAAGVFGKFVDIRDVTLN.

Positions 347, 408, and 411 each coordinate [4Fe-4S] cluster.

This sequence belongs to the aconitase/IPM isomerase family. LeuC type 1 subfamily. In terms of assembly, heterodimer of LeuC and LeuD. Requires [4Fe-4S] cluster as cofactor.

It catalyses the reaction (2R,3S)-3-isopropylmalate = (2S)-2-isopropylmalate. Its pathway is amino-acid biosynthesis; L-leucine biosynthesis; L-leucine from 3-methyl-2-oxobutanoate: step 2/4. Catalyzes the isomerization between 2-isopropylmalate and 3-isopropylmalate, via the formation of 2-isopropylmaleate. In Haemophilus influenzae (strain ATCC 51907 / DSM 11121 / KW20 / Rd), this protein is 3-isopropylmalate dehydratase large subunit.